Consider the following 612-residue polypeptide: DNA mismatch repair protein MutL (612 aa).

The protein belongs to the DNA mismatch repair MutL/HexB family.

In terms of biological role, this protein is involved in the repair of mismatches in DNA. It is required for dam-dependent methyl-directed DNA mismatch repair. May act as a 'molecular matchmaker', a protein that promotes the formation of a stable complex between two or more DNA-binding proteins in an ATP-dependent manner without itself being part of a final effector complex. The protein is DNA mismatch repair protein MutL of Afipia carboxidovorans (strain ATCC 49405 / DSM 1227 / KCTC 32145 / OM5) (Oligotropha carboxidovorans).